The primary structure comprises 356 residues: Carminomycin 4-O-methyltransferase DnrK (356 aa).

R153 provides a ligand contact to S-adenosyl-L-methionine. A substrate-binding site is contributed by D163. Residues G187, E210, 237–238, and S252 each bind S-adenosyl-L-methionine; that span reads DF. Residues N257 and R303 each coordinate substrate.

The protein belongs to the class I-like SAM-binding methyltransferase superfamily. Cation-independent O-methyltransferase family. As to quaternary structure, homodimer and homotetramer in equilibrium.

The catalysed reaction is carminomycin + S-adenosyl-L-methionine = daunorubicin + S-adenosyl-L-homocysteine + H(+). The protein operates within antibiotic biosynthesis; daunorubicin biosynthesis. Its pathway is antibiotic biosynthesis; carminomycin biosynthesis. In terms of biological role, involved in the biosynthesis of the anthracyclines carminomycin and daunorubicin (daunomycin) which are aromatic polyketide antibiotics that exhibit high cytotoxicity and are widely applied in the chemotherapy of a variety of cancers. In vivo, catalyzes the transfer of a methyl group from S-adenosyl-L-methionine to the 4-O-position of carminomycin to form daunorubicin. In vitro, it also methylates the anthracyclines rhodomycin D (10-carbomethoxy-13-deoxycarminomycin) and 13-deoxy-carminomycin at the 4-hydroxyl position. It is quite specific with respect to the length of the carbohydrate chain at the C7 position, but it can accept substrates with bulky substituent at C10 position. The polypeptide is Carminomycin 4-O-methyltransferase DnrK (dnrK) (Streptomyces peucetius).